Here is a 348-residue protein sequence, read N- to C-terminus: Terpene cyclase ctvD (348 aa).

Residues 2–22 (ALSAYFLLCLSVLGLDAIYGF) traverse the membrane as a helical segment. Asn51 carries an N-linked (GlcNAc...) asparagine glycan. Transmembrane regions (helical) follow at residues 77-97 (PGLS…WVAI), 116-136 (LFAM…WCAI), 161-181 (LIPI…LLPE), 191-211 (QIAI…HWGL), 235-255 (FAFV…LTLI), 283-303 (GLWF…LWAM), and 323-343 (LKVG…WLLW).

The protein belongs to the membrane-bound ascI terpene cyclase family.

Its subcellular location is the membrane. Its pathway is mycotoxin biosynthesis. In terms of biological role, hydrolase; part of the gene cluster that mediates the biosynthesis of citreoviridin, an inhibitor of the of F1-ATPase beta-subunit. The HR-PKS ctvA accepts acetyl-CoA as the starter unit and catalyzes eight iterations of malonyl-CoA extension and four iterations of SAM-dependent methylation at C4, C12, C14, and C16. The KR and DH domains selectively act on the first six iterations to generate the hexaene chain. In the last three iterations, the KR and DH domains terminate their functions to yield a beta,delta-diketo ester moiety, which then undergoes intramolecular cyclization to yield an alpha-pyrone intermediate. Subsequently, ctvB methylates the alpha-pyrone hydroxyl group to generate citreomontanin. In order to form the tetrahydrofuran ring with the correct stereochemistry, the terminal alkenes of citreomontanin need to undergo isomerization to yield a (17Z)-hexaene, a step that could be catalyzed by ctvC. The (17Z)-hexaene then undergoes bisepoxidation by ctvC to form a (17R,16R,15S,14R)-bisepoxide moiety. Lastly, ctvD acts as a regioselective hydrolase to form the tetrahydrofuran ring with the substituents in the correct absolute configuration, completing the biosynthesis of citreoviridin. The protein is Terpene cyclase ctvD of Aspergillus terreus (strain NIH 2624 / FGSC A1156).